Here is a 298-residue protein sequence, read N- to C-terminus: Acetyl-coenzyme A carboxylase carboxyl transferase subunit beta (298 aa).

In terms of domain architecture, CoA carboxyltransferase N-terminal spans 26-295 (LWIKCPETGE…DNANAVVPLA (270 aa)).

Belongs to the AccD/PCCB family. In terms of assembly, acetyl-CoA carboxylase is a heterohexamer composed of biotin carboxyl carrier protein (AccB), biotin carboxylase (AccC) and two subunits each of ACCase subunit alpha (AccA) and ACCase subunit beta (AccD).

It is found in the cytoplasm. The catalysed reaction is N(6)-carboxybiotinyl-L-lysyl-[protein] + acetyl-CoA = N(6)-biotinyl-L-lysyl-[protein] + malonyl-CoA. The protein operates within lipid metabolism; malonyl-CoA biosynthesis; malonyl-CoA from acetyl-CoA: step 1/1. Its function is as follows. Component of the acetyl coenzyme A carboxylase (ACC) complex. Biotin carboxylase (BC) catalyzes the carboxylation of biotin on its carrier protein (BCCP) and then the CO(2) group is transferred by the transcarboxylase to acetyl-CoA to form malonyl-CoA. This Agrobacterium fabrum (strain C58 / ATCC 33970) (Agrobacterium tumefaciens (strain C58)) protein is Acetyl-coenzyme A carboxylase carboxyl transferase subunit beta.